A 423-amino-acid polypeptide reads, in one-letter code: Protein CLP1 homolog (423 aa).

ATP contacts are provided by residues glutamate 16, lysine 57, and aspartate 119 to threonine 124.

The protein belongs to the Clp1 family. Clp1 subfamily.

Its subcellular location is the nucleus. Required for endonucleolytic cleavage during polyadenylation-dependent pre-mRNA 3'-end formation. This chain is Protein CLP1 homolog (cbc), found in Drosophila melanogaster (Fruit fly).